The primary structure comprises 163 residues: Beta-lactoglobulin-2 (163 aa).

Cystine bridges form between Cys-66/Cys-161 and Cys-106/Cys-120.

Belongs to the calycin superfamily. Lipocalin family. In terms of assembly, monomer.

The protein resides in the secreted. Lactoglobulin is the primary component of whey, it binds retinol and is probably involved in the transport of that molecule. This Felis catus (Cat) protein is Beta-lactoglobulin-2 (LGB2).